Here is a 521-residue protein sequence, read N- to C-terminus: GMP synthase [glutamine-hydrolyzing] (521 aa).

In terms of domain architecture, Glutamine amidotransferase type-1 spans 5–197 (KILILDFGSQ…VLDICGAQPS (193 aa)). Cysteine 81 acts as the Nucleophile in catalysis. Active-site residues include histidine 171 and glutamate 173. Residues 198-390 (WTMPNYIEEA…LGLPREMVYR (193 aa)) enclose the GMPS ATP-PPase domain. 225-231 (SGGVDSS) is an ATP binding site.

As to quaternary structure, homodimer.

The enzyme catalyses XMP + L-glutamine + ATP + H2O = GMP + L-glutamate + AMP + diphosphate + 2 H(+). It participates in purine metabolism; GMP biosynthesis; GMP from XMP (L-Gln route): step 1/1. Catalyzes the synthesis of GMP from XMP. The sequence is that of GMP synthase [glutamine-hydrolyzing] from Neisseria meningitidis serogroup C / serotype 2a (strain ATCC 700532 / DSM 15464 / FAM18).